Here is a 509-residue protein sequence, read N- to C-terminus: Surface lipoprotein assembly modifier (509 aa).

The signal sequence occupies residues 1-32 (MNLMINLKPLTFLPFFGRLVFLSGVIYNTAWA). The N-terminal domain stretch occupies residues 33-204 (NTVIPVDNSR…SYIDTINQRD (172 aa)). Positions 43–72 (PDETFSQTSPKQHLFSQKPKPTEPTSSASS) are disordered. A compositionally biased stretch (polar residues) spans 46–57 (TFSQTSPKQHLF). The stretch at 120 to 153 (FLLKWAQAVVARKQGKLNESVRLYRQIIAEKPNL) is one TPR repeat. Residues 205-509 (SWNVYGGVNY…RIYLTFSKTF (305 aa)) are C-terminal probable beta barrel. Beta stranded transmembrane passes span 206 to 216 (WNVYGGVNYLH), 245 to 256 (LSYFINLSKNWS), 261 to 270 (FFTEFSADIN), 284 to 294 (STRLNLGGGYR), 298 to 308 (TEVKLMPFVEQ), 331 to 341 (SGINLDVDYWL), 345 to 355 (WKISTVLEYTE), 371 to 381 (YSISNTLIYMP), 386 to 395 (FWFVGLDYYQ), 408 to 417 (QGIRLGWGQE), 423 to 432 (STRLQTSYAT), 461 to 470 (GVNFTIWHRS), 476 to 485 (ITPKITWAYQ), and 499 to 509 (NRIYLTFSKTF).

This sequence belongs to the Slam family.

The protein resides in the cell outer membrane. Functionally, required for correct export to the cell surface of some cell outer membrane lipoproteins (tested with PM1514) upon heterologous expression in E.coli and probably also in Pasteurella. In Pasteurella multocida (strain Pm70), this protein is Surface lipoprotein assembly modifier.